The primary structure comprises 222 residues: Protein GrpE (222 aa).

The interval 1–82 (MSDFNKDEYL…KADDTLTPLG (82 aa)) is disordered. Residues 20 to 71 (SGQAAPAAASADSAAAAAGATQEGAAQPAAAQSQENGDSAAADGADKAGAAD) are compositionally biased toward low complexity.

Belongs to the GrpE family. Homodimer.

Its subcellular location is the cytoplasm. Its function is as follows. Participates actively in the response to hyperosmotic and heat shock by preventing the aggregation of stress-denatured proteins, in association with DnaK and GrpE. It is the nucleotide exchange factor for DnaK and may function as a thermosensor. Unfolded proteins bind initially to DnaJ; upon interaction with the DnaJ-bound protein, DnaK hydrolyzes its bound ATP, resulting in the formation of a stable complex. GrpE releases ADP from DnaK; ATP binding to DnaK triggers the release of the substrate protein, thus completing the reaction cycle. Several rounds of ATP-dependent interactions between DnaJ, DnaK and GrpE are required for fully efficient folding. The sequence is that of Protein GrpE from Bifidobacterium adolescentis (strain ATCC 15703 / DSM 20083 / NCTC 11814 / E194a).